Here is a 139-residue protein sequence, read N- to C-terminus: Envelope glycoprotein N (139 aa).

Residues 1–100 (MACGKTESGD…CHSHFYGLSV (100 aa)) lie on the Virion surface side of the membrane. Residues 101–121 (SSFASIWMMVNAIVFICAFGV) traverse the membrane as a helical segment. Residues 122-139 (FMRHWCYKAFTSDTAKGY) are Intravirion-facing.

Belongs to the herpesviridae glycoprotein N family. Interacts (via N-terminus) with gM (via N-terminus). The gM-gN heterodimer forms the gCII complex.

It localises to the virion membrane. The protein localises to the host membrane. It is found in the host Golgi apparatus. Its subcellular location is the host trans-Golgi network. Envelope glycoprotein necessary for proper maturation of gM and modulation of its membrane fusion activity. Also plays a critical role in virion morphogenesis. This chain is Envelope glycoprotein N, found in Mus musculus (Mouse).